The sequence spans 497 residues: Probable cytosol aminopeptidase (497 aa).

2 residues coordinate Mn(2+): lysine 264 and aspartate 269. Lysine 276 is an active-site residue. Residues aspartate 287, aspartate 346, and glutamate 348 each coordinate Mn(2+). Arginine 350 is a catalytic residue.

Belongs to the peptidase M17 family. Mn(2+) serves as cofactor.

It localises to the cytoplasm. The enzyme catalyses Release of an N-terminal amino acid, Xaa-|-Yaa-, in which Xaa is preferably Leu, but may be other amino acids including Pro although not Arg or Lys, and Yaa may be Pro. Amino acid amides and methyl esters are also readily hydrolyzed, but rates on arylamides are exceedingly low.. It catalyses the reaction Release of an N-terminal amino acid, preferentially leucine, but not glutamic or aspartic acids.. Its function is as follows. Presumably involved in the processing and regular turnover of intracellular proteins. Catalyzes the removal of unsubstituted N-terminal amino acids from various peptides. The polypeptide is Probable cytosol aminopeptidase (Persephonella marina (strain DSM 14350 / EX-H1)).